A 153-amino-acid chain; its full sequence is Late embryogenesis abundant protein B19.4 (153 aa).

Residues M1–S153 are disordered. Composition is skewed to basic and acidic residues over residues E7–E19, E32–R122, and G133–S153. Tandem repeats lie at residues R43 to H62, K63 to H82, K83 to H102, and K103 to R122. A 4 X 20 AA tandem repeats region spans residues R43–R122.

This sequence belongs to the small hydrophilic plant seed protein family.

Functionally, lea proteins are late embryonic proteins abundant in higher plant seed embryos. The polypeptide is Late embryogenesis abundant protein B19.4 (B19.4) (Hordeum vulgare (Barley)).